Reading from the N-terminus, the 108-residue chain is Kanamycin resistance protein (108 aa).

Residues 1–99 form the N-acetyltransferase domain; it reads SRTLLLERGR…PAVYMVQTRQ (99 aa).

The protein is Kanamycin resistance protein of Rhizobium radiobacter (Agrobacterium tumefaciens).